The sequence spans 337 residues: Fructose-1,6-bisphosphatase class 1 (337 aa).

Mg(2+)-binding residues include Glu94, Asp116, Leu118, and Asp119. Residues 119 to 122 (DGSS), Asn210, and Lys276 each bind substrate. Glu282 contacts Mg(2+).

Belongs to the FBPase class 1 family. As to quaternary structure, homotetramer. Mg(2+) is required as a cofactor.

It localises to the cytoplasm. The enzyme catalyses beta-D-fructose 1,6-bisphosphate + H2O = beta-D-fructose 6-phosphate + phosphate. It participates in carbohydrate biosynthesis; gluconeogenesis. This Burkholderia cenocepacia (strain HI2424) protein is Fructose-1,6-bisphosphatase class 1.